Here is a 136-residue protein sequence, read N- to C-terminus: Small ribosomal subunit protein uS9 (136 aa).

The segment covering 103 to 116 has biased composition (basic and acidic residues); the sequence is PLKTEGHLSRDPRA. A disordered region spans residues 103–136; it reads PLKTEGHLSRDPRAKERRKYGLKKARKAPQFSKR. Positions 117 to 136 are enriched in basic residues; it reads KERRKYGLKKARKAPQFSKR.

This sequence belongs to the universal ribosomal protein uS9 family.

This Prochlorococcus marinus (strain SARG / CCMP1375 / SS120) protein is Small ribosomal subunit protein uS9 (rpsI).